Here is a 206-residue protein sequence, read N- to C-terminus: Ribosomal RNA small subunit methyltransferase G (206 aa).

Residues Gly-74, Leu-79, 125-126, and Arg-140 contribute to the S-adenosyl-L-methionine site; that span reads VE.

It belongs to the methyltransferase superfamily. RNA methyltransferase RsmG family.

The protein localises to the cytoplasm. The enzyme catalyses guanosine(527) in 16S rRNA + S-adenosyl-L-methionine = N(7)-methylguanosine(527) in 16S rRNA + S-adenosyl-L-homocysteine. Its function is as follows. Specifically methylates the N7 position of guanine in position 527 of 16S rRNA. The polypeptide is Ribosomal RNA small subunit methyltransferase G (Shewanella sp. (strain MR-7)).